The following is a 518-amino-acid chain: MGDEDVDGKCKNMSACSSTTSYSTKLFLFMVPLVVISGFVFVNIGPKDSTSLLTSLSTTTSHLPPPFLSTAPAPAPSPLLPEILPSLPASSLSTKVESIQGDYNRTIQLNMINVTATSNNVSSTASLEPKKRRVLSNLEKIEFKLQKARASIKAASMDDPVDDPDYVPLGPMYWNAKVFHRSYLEMEKQFKIYVYKEGEPPLFHDGPCKSIYSMEGSFIYEIETDTRFRTNNPDKAHVFYLPFSVVKMVRYVYERNSRDFSPIRNTVKDYINLVGDKYPYWNRSIGADHFILSCHDWGPEASFSHPHLGHNSIRALCNANTSERFKPRKDVSIPEINLRTGSLTGLVGGPSPSSRPILAFFAGGVHGPVRPVLLQHWENKDNDIRVHKYLPRGTSYSDMMRNSKFCICPSGYEVASPRIVEALYSGCVPVLINSGYVPPFSDVLNWRSFSVIVSVEDIPNLKTILTSISPRQYLRMYRRVLKVRRHFEVNSPAKRFDVFHMILHSIWVRRLNVKIREV.

Over Met1 to Lys25 the chain is Cytoplasmic. A helical; Signal-anchor for type II membrane protein membrane pass occupies residues Leu26–Pro46. Over Lys47 to Val518 the chain is Lumenal. N-linked (GlcNAc...) asparagine glycosylation is found at Asn104, Asn113, Asn120, Asn282, and Asn320.

Belongs to the glycosyltransferase 47 family.

The protein resides in the golgi apparatus membrane. In terms of biological role, may be involved in cell wall biosynthesis. This is Probable glycosyltransferase At5g03795 from Arabidopsis thaliana (Mouse-ear cress).